Reading from the N-terminus, the 138-residue chain is Putative phosphatidylinositol 3,4,5-trisphosphate 3-phosphatase TPTE2P1 (138 aa).

Residues 1–75 (MPAAFPCVFP…FAVEILFGMV (75 aa)) form the C2 tensin-type domain.

In Homo sapiens (Human), this protein is Putative phosphatidylinositol 3,4,5-trisphosphate 3-phosphatase TPTE2P1 (TPTE2P1).